Reading from the N-terminus, the 326-residue chain is MLTLARQQQRQNIRWLLCLSVLMLLALLLSLCAGEQWISPGDWFTPRGELFVWQIRLPRTLAVLLVGAALAISGAVMQALFENPLAEPGLLGVSNGAGVGLIAAVLLGQGQLPNWALGLCAIAGALIITLILLRFARRHLSTSRLLLAGVALGIICSALMTWAIYFSTSVDLRQLMYWMMGGFGGVDWRQSWLMLALIPVLLWICCQSRPMNMLALGEISARQLGLPLWFWRNVLVAATGWMVGVSVALAGAIGFIGLVIPHILRLCGLTDHRVLLPGCALAGASALLLADIVARLALAAAELPIGVVTATLGAPVFIWLLLKAGR.

The next 9 membrane-spanning stretches (helical) occupy residues 15–35 (WLLC…CAGE), 61–81 (LAVL…QALF), 88–108 (PGLL…VLLG), 112–132 (LPNW…TLIL), 146–166 (LLAG…AIYF), 184–204 (GGVD…LLWI), 240–260 (GWMV…GLVI), 274–294 (VLLP…DIVA), and 302–322 (ELPI…WLLL).

It belongs to the binding-protein-dependent transport system permease family. FecCD subfamily. In terms of assembly, the complex is composed of two ATP-binding proteins (BtuD), two transmembrane proteins (BtuC) and a solute-binding protein (BtuF).

It localises to the cell inner membrane. Its function is as follows. Part of the ABC transporter complex BtuCDF involved in vitamin B12 import. Involved in the translocation of the substrate across the membrane. The chain is Vitamin B12 import system permease protein BtuC from Escherichia coli O7:K1 (strain IAI39 / ExPEC).